Consider the following 409-residue polypeptide: Isocitrate dehydrogenase [NADP] 1 (409 aa).

Residues Lys75, Thr78, Thr80, and Arg85 each coordinate NADP(+). 3 residues coordinate Mn(2+): Asp255, Asp278, and Asp282. Residues Gly313, Thr314, Val315, His318, and Asn331 each coordinate NADP(+).

It belongs to the isocitrate and isopropylmalate dehydrogenases family. As to quaternary structure, homodimer. Mg(2+) is required as a cofactor. It depends on Mn(2+) as a cofactor.

It carries out the reaction D-threo-isocitrate + NADP(+) = 2-oxoglutarate + CO2 + NADPH. Catalyzes the oxidative decarboxylation of isocitrate to 2-oxoglutarate and carbon dioxide with the concomitant reduction of NADP(+). The chain is Isocitrate dehydrogenase [NADP] 1 (icd) from Mycobacterium bovis (strain ATCC BAA-935 / AF2122/97).